The following is a 481-amino-acid chain: Arginine biosynthesis bifunctional protein ArgJ, chloroplastic (481 aa).

The substrate site is built by Thr225, Lys251, Thr262, Glu349, Asn476, and Thr481. Catalysis depends on Thr262, which acts as the Nucleophile.

The protein belongs to the ArgJ family. Heterodimer of an alpha and a beta chain.

Its subcellular location is the plastid. It localises to the chloroplast. The catalysed reaction is N(2)-acetyl-L-ornithine + L-glutamate = N-acetyl-L-glutamate + L-ornithine. It catalyses the reaction L-glutamate + acetyl-CoA = N-acetyl-L-glutamate + CoA + H(+). The protein operates within amino-acid biosynthesis; L-arginine biosynthesis; L-ornithine and N-acetyl-L-glutamate from L-glutamate and N(2)-acetyl-L-ornithine (cyclic): step 1/1. It participates in amino-acid biosynthesis; L-arginine biosynthesis; N(2)-acetyl-L-ornithine from L-glutamate: step 1/4. Functionally, catalyzes two activities which are involved in the cyclic version of arginine biosynthesis: the synthesis of acetylglutamate from glutamate and acetyl-CoA, and of ornithine by transacetylation between acetylornithine and glutamate. In Populus trichocarpa (Western balsam poplar), this protein is Arginine biosynthesis bifunctional protein ArgJ, chloroplastic.